We begin with the raw amino-acid sequence, 667 residues long: Probable potassium transport system protein Kup (667 aa).

12 consecutive transmembrane segments (helical) span residues 5-25 (GLLI…LYVM), 47-67 (ISLI…IIAL), 88-108 (AAWL…DGTL), 133-153 (VSNQ…LFSI), 164-184 (AFGP…LINI), 210-230 (AGFA…ALYS), 243-263 (SWPF…VWIL), 287-307 (LASI…LITG), 336-356 (IYIP…VLFF), 367-387 (GLSI…WLVL), 393-413 (LANL…MGSS), and 420-440 (GGYV…VWYF).

Belongs to the HAK/KUP transporter (TC 2.A.72) family.

Its subcellular location is the cell membrane. The catalysed reaction is K(+)(in) + H(+)(in) = K(+)(out) + H(+)(out). Transport of potassium into the cell. Likely operates as a K(+):H(+) symporter. In Lactobacillus delbrueckii subsp. bulgaricus (strain ATCC 11842 / DSM 20081 / BCRC 10696 / JCM 1002 / NBRC 13953 / NCIMB 11778 / NCTC 12712 / WDCM 00102 / Lb 14), this protein is Probable potassium transport system protein Kup.